The chain runs to 647 residues: LIM domain kinase 1 (647 aa).

LIM zinc-binding domains are found at residues 25-75 (CASC…CKKD) and 84-137 (CHGC…CGQC). The region spanning 165–258 (LVSIPASAHG…LLQLTLEHDP (94 aa)) is the PDZ domain. Position 210 is a phosphoserine (Ser210). Phosphothreonine is present on Thr229. Residues 256–316 (HDPHDSLGHG…SLVSPASQRK (61 aa)) are disordered. Residues 278-289 (HTPSGQAGSSAR) show a composition bias toward polar residues. 4 positions are modified to phosphoserine: Ser298, Ser302, Ser307, and Ser310. Ser323 carries the phosphoserine; by MAPKAPK2 modification. A Phosphoserine modification is found at Ser337. The region spanning 339–604 (LIHGEVLGKG…PSFVKLEQWL (266 aa)) is the Protein kinase domain. ATP-binding positions include 345–353 (LGKGCFGQA) and Lys368. Residue Asp460 is part of the active site. Thr508 is subject to Phosphothreonine; by ROCK1 and PAK1.

It belongs to the protein kinase superfamily. TKL Ser/Thr protein kinase family. As to quaternary structure, interacts (via LIM domain) with the cytoplasmic domain of NRG1. Interacts with NISCH. Interacts with RLIM and RNF6. Self-associates to form homodimers. Interacts with HSP90AA1; this interaction promotes LIMK1 dimerization and subsequent transphosphorylation. Interacts with CDKN1C. Interacts with SSH1. Interacts with ROCK1. Interacts (via LIM zinc-binding domains) with FAM89B/LRAP25 (via LRR repeat). Forms a tripartite complex with CDC42BPA, CDC42BPB and FAM89B/LRAP25. Post-translationally, autophosphorylated. Phosphorylated on Thr-508 by ROCK1 and PAK1, resulting in activation. Phosphorylated by PAK4 which increases the ability of LIMK1 to phosphorylate cofilin. Phosphorylated at Ser-323 by MAPKAPK2 during activation of VEGFA-induced signaling, which results in activation of LIMK1 and promotion of actin reorganization, cell migration, and tubule formation of endothelial cells. Dephosphorylated and inactivated by SSH1. Phosphorylated by CDC42BP. Ubiquitinated. 'Lys-48'-linked polyubiquitination by RNF6 leads to proteasomal degradation through the 26S proteasome, modulating LIMK1 levels in the growth cone and its effect on axonal outgrowth. Also polyubiquitinated by RLIM.

It localises to the cytoplasm. Its subcellular location is the nucleus. The protein resides in the cytoskeleton. The protein localises to the cell projection. It is found in the lamellipodium. It carries out the reaction L-seryl-[protein] + ATP = O-phospho-L-seryl-[protein] + ADP + H(+). It catalyses the reaction L-threonyl-[protein] + ATP = O-phospho-L-threonyl-[protein] + ADP + H(+). Functionally, serine/threonine-protein kinase that plays an essential role in the regulation of actin filament dynamics. Acts downstream of several Rho family GTPase signal transduction pathways. Activated by upstream kinases including ROCK1, PAK1 and PAK4, which phosphorylate LIMK1 on a threonine residue located in its activation loop. LIMK1 subsequently phosphorylates and inactivates the actin binding/depolymerizing factors cofilin-1/CFL1, cofilin-2/CFL2 and destrin/DSTN, thereby preventing the cleavage of filamentous actin (F-actin), and stabilizing the actin cytoskeleton. In this way LIMK1 regulates several actin-dependent biological processes including cell motility, cell cycle progression, and differentiation. Phosphorylates TPPP on serine residues, thereby promoting microtubule disassembly. Stimulates axonal outgrowth and may be involved in brain development. The polypeptide is LIM domain kinase 1 (Limk1) (Rattus norvegicus (Rat)).